We begin with the raw amino-acid sequence, 473 residues long: Photosystem II CP43 reaction center protein (473 aa).

The propeptide occupies 1-14 (MKILYSLRRFYHVE). Residue Thr-15 is modified to N-acetylthreonine. Position 15 is a phosphothreonine (Thr-15). A run of 5 helical transmembrane segments spans residues 69 to 93 (LFEV…PHLA), 134 to 155 (LLGP…QDRN), 178 to 200 (KALY…RKIT), 255 to 275 (KPFA…LSYS), and 291 to 312 (WFNN…ASQA). [CaMn4O5] cluster is bound at residue Glu-367. A helical membrane pass occupies residues 447 to 471 (RARAAAAGFEKGIDRDLEPVVYMTP).

The protein belongs to the PsbB/PsbC family. PsbC subfamily. As to quaternary structure, PSII is composed of 1 copy each of membrane proteins PsbA, PsbB, PsbC, PsbD, PsbE, PsbF, PsbH, PsbI, PsbJ, PsbK, PsbL, PsbM, PsbT, PsbX, PsbY, PsbZ, Psb30/Ycf12, at least 3 peripheral proteins of the oxygen-evolving complex and a large number of cofactors. It forms dimeric complexes. Requires Binds multiple chlorophylls and provides some of the ligands for the Ca-4Mn-5O cluster of the oxygen-evolving complex. It may also provide a ligand for a Cl- that is required for oxygen evolution. PSII binds additional chlorophylls, carotenoids and specific lipids. as cofactor. In terms of processing, phosphorylated in both bundle sheath and mesophyll cells, phosphorylation increases when cells are grown under high rather than low light regimes (70 vs 900 umol photons/m-2/s).

Its subcellular location is the plastid. The protein resides in the chloroplast thylakoid membrane. One of the components of the core complex of photosystem II (PSII). It binds chlorophyll and helps catalyze the primary light-induced photochemical processes of PSII. PSII is a light-driven water:plastoquinone oxidoreductase, using light energy to abstract electrons from H(2)O, generating O(2) and a proton gradient subsequently used for ATP formation. The polypeptide is Photosystem II CP43 reaction center protein (Zea mays (Maize)).